We begin with the raw amino-acid sequence, 229 residues long: Claudin-25 (229 aa).

The Cytoplasmic segment spans residues 1-10; sequence MAWSFRAKVQ. The chain crosses the membrane as a helical span at residues 11–31; sequence LGGLLLSLLGWVCSCVTTILP. At 32 to 81 the chain is on the extracellular side; sequence QWKTLNLELNEMETWIMGIWEVCVDREEVATVCKAFESFLSLPQELQVAR. A helical transmembrane segment spans residues 82–102; the sequence is ILMVASHGLGLLGLLLCSFGS. Over 103–124 the chain is Cytoplasmic; that stretch reads ECFQFHRIRWVFKRRLGLLGRT. Residues 125–145 traverse the membrane as a helical segment; the sequence is LEASASATTLLPVSWVAHATI. Topologically, residues 146–164 are extracellular; it reads QDFWDDSIPDIIPRWEFGG. A helical transmembrane segment spans residues 165 to 185; sequence ALYLGWAAGIFLALGGLLLIF. At 186 to 229 the chain is on the cytoplasmic side; it reads SACLGKEDVPFPLMAGPTVPLSCAPVEESDGSFHLMLRPRNLVI.

This sequence belongs to the claudin family.

The protein localises to the cell junction. Its subcellular location is the tight junction. It localises to the cell membrane. In terms of biological role, plays a major role in tight junction-specific obliteration of the intercellular space, through calcium-independent cell-adhesion activity. The sequence is that of Claudin-25 (CLDN25) from Homo sapiens (Human).